The following is a 478-amino-acid chain: Noelin-3 (478 aa).

A signal peptide spans 1–23 (MSAPLLKLGAVLSTMAMISNWMS). 5 N-linked (GlcNAc...) asparagine glycosylation sites follow: N33, N95, N179, N299, and N465. Residues 77-217 (CSRDAKSRQL…TRLRDCMKKL (141 aa)) are a coiled coil. In terms of domain architecture, Olfactomedin-like spans 218-470 (TCGKLMKITG…QVLFNVTLFH (253 aa)). A disulfide bridge links C219 with C401.

As to quaternary structure, peripherally associated with AMPAR complex. AMPAR complex consists of an inner core made of 4 pore-forming GluA/GRIA proteins (GRIA1, GRIA2, GRIA3 and GRIA4) and 4 major auxiliary subunits arranged in a twofold symmetry. One of the two pairs of distinct binding sites is occupied either by CNIH2, CNIH3 or CACNG2, CACNG3. The other harbors CACNG2, CACNG3, CACNG4, CACNG8 or GSG1L. This inner core of AMPAR complex is complemented by outer core constituents binding directly to the GluA/GRIA proteins at sites distinct from the interaction sites of the inner core constituents. Outer core constituents include at least PRRT1, PRRT2, CKAMP44/SHISA9, FRRS1L and NRN1. The proteins of the inner and outer core serve as a platform for other, more peripherally associated AMPAR constituents, including OLFM3. Alone or in combination, these auxiliary subunits control the gating and pharmacology of the AMPAR complex and profoundly impact their biogenesis and protein processing. Homodimer. Interacts with MYOC. Interacts with OLFM2. As to expression, expressed in the brain (at protein level). Also expressed in the retina, mainly in the ganglion cell layer and in the amacrine cell subregion of the inner nuclear layer. Expressed at high levels in the epithelial cells of the posterior iris and the ciliary body and, at lower levels, in the trabecular meshwork. Isoform 2 preferentially expressed in retina and brain, while isoform 1 preferentially expressed in the tissues of the eye angle.

It localises to the secreted. Its subcellular location is the synapse. This Rattus norvegicus (Rat) protein is Noelin-3 (Olfm3).